Reading from the N-terminus, the 456-residue chain is Putative sodium-coupled neutral amino acid transporter 11 (456 aa).

The tract at residues methionine 1–glutamine 25 is disordered. A helical membrane pass occupies residues phenylalanine 58–isoleucine 78. The N-linked (GlcNAc...) asparagine glycan is linked to asparagine 94. The next 6 membrane-spanning stretches (helical) occupy residues glycine 98–isoleucine 118, valine 143–serine 163, leucine 171–alanine 191, alanine 206–isoleucine 226, methionine 252–phenylalanine 272, and valine 291–threonine 313. Asparagine 325 carries an N-linked (GlcNAc...) asparagine glycan. Helical transmembrane passes span valine 329 to isoleucine 349, cysteine 351 to isoleucine 371, and isoleucine 390 to alanine 410.

The protein belongs to the amino acid/polyamine transporter 2 family.

The protein resides in the membrane. In terms of biological role, putative sodium-dependent amino acid/proton antiporter. The sequence is that of Putative sodium-coupled neutral amino acid transporter 11 (SLC38A11) from Macaca fascicularis (Crab-eating macaque).